Reading from the N-terminus, the 254-residue chain is uncharacterized protein (254 aa).

Positions 66–111 (DMVSEMNKRMDDLAARIVVLEDEKAELRRINQRLTEKVRDKDMEKA) form a coiled coil.

This is an uncharacterized protein from Ostreid herpesvirus 1 (isolate France) (OsHV-1).